The primary structure comprises 123 residues: MSSDVAGVKKSSSSSSSTSSPFMFSMLLMFSRSISSTIKISANRILLCCTSSFSTTSGFFKIESNRLTSRSSSGIFSRTACNRSCGNCFSISAVLSFCVAPLCCKSTGRFSSAIYLLIFRSTR.

This is an uncharacterized protein from Saccharomyces cerevisiae (strain ATCC 204508 / S288c) (Baker's yeast).